The following is a 793-amino-acid chain: Protein smoothened (793 aa).

The signal sequence occupies residues 1-32 (MAAGRPVRGPELAPRRLLQLLLLVLLGGPGRG). Topologically, residues 33-237 (AALSGNVTGP…EAEHQDMHSY (205 aa)) are extracellular. Residues 35–61 (LSGNVTGPGPHSASGSSRRDVPVTSPP) form a disordered region. Asn-38 carries N-linked (GlcNAc...) asparagine glycosylation. Disulfide bonds link Cys-68–Cys-182, Cys-74–Cys-138, Cys-82–Cys-131, Cys-122–Cys-158, and Cys-151–Cys-173. One can recognise an FZ domain in the interval 69-185 (GRAAHCEPLR…DHFPEGCPNE (117 aa)). Asp-99 serves as a coordination point for cholesterol. N-linked (GlcNAc...) asparagine glycosylation is present at Asn-192. 3 cysteine pairs are disulfide-bonded: Cys-197-Cys-217, Cys-221-Cys-299, and Cys-318-Cys-394. A helical transmembrane segment spans residues 238–258 (IAAFGAVTGLCTLFTLATFVA). Residues 259 to 265 (DWRNSNR) are Cytoplasmic-facing. Residues 266-286 (YPAVILFYVNACFFVGSIGWL) form a helical membrane-spanning segment. The Extracellular segment spans residues 287 to 318 (AQFMDGARREIVCRADGTMRFGEPTSSETLSC). A helical transmembrane segment spans residues 319 to 339 (VIIFVIVYYALMAGVVWFVVL). Residues 340–362 (TYAWHTSFKALGTTYQPLSGKTS) are Cytoplasmic-facing. A helical membrane pass occupies residues 363 to 383 (YFHLLTWSLPFVLTVAILAVA). At 384–406 (QVDGDSVSGICFVGYKNYRYRAG) the chain is on the extracellular side. Tyr-398 is a binding site for cholesterol. Residues 407-427 (FVLAPIGLVLIVGGYFLIRGV) traverse the membrane as a helical segment. The Cytoplasmic segment spans residues 428–455 (MTLFSIKSNHPGLLSEKAASKINETMLR). The chain crosses the membrane as a helical span at residues 456 to 476 (LGIFGFLAFGFVLITFSCHFY). Residues 477–528 (DFFNQAEWERSFRDYVLCQANVTIGLPTKKPIPDCEIKNRPSLLVEKINLFA) lie on the Extracellular side of the membrane. Cys-494 and Cys-511 are disulfide-bonded. N-linked (GlcNAc...) asparagine glycosylation occurs at Asn-497. The helical transmembrane segment at 529–549 (MFGTGIAMSTWVWTKATLLIW) threads the bilayer. The segment at 542–573 (TKATLLIWRRTWCRLTGHSDDEPKRIKKSKMI) is interaction with BBS5 and BBS7. Over 550-793 (RRTWCRLTGH…AEILDADSDF (244 aa)) the chain is Cytoplasmic. A phosphoserine mark is found at Ser-560, Ser-578, and Ser-594. Residues 574–657 (AKAFSKRREL…TPVPPEEQAN (84 aa)) are required for interaction with PRKACA. The tract at residues 585–597 (QNPGQELSFSMHT) is interaction with DLG5. Thr-597 is modified (phosphothreonine). A phosphoserine mark is found at Ser-599 and Ser-642. 2 positions are modified to phosphothreonine: Thr-644 and Thr-648. A Phosphoserine modification is found at Ser-666. Residues 674-684 (GRKKKRRKRKK) show a composition bias toward basic residues. Positions 674–703 (GRKKKRRKRKKEVCPLRPAPELHHSAPVPA) are disordered.

This sequence belongs to the G-protein coupled receptor Fz/Smo family. Homodimer. Interacts (via C-terminus) with protein kinase A catalytic subunit PRKACA; interacts with free PRKACA subunits and the interaction leads to sequestration of PRKACA at the membrane, preventing PRKACA-mediated phosphorylation of GLI transcription factors. Interacts with ARRB2. Interacts with BBS5 and BBS7; the interactions are indicative for the association of SMO with the BBsome complex to facilitate ciliary localization of SMO. Interacts with KIF7, DLG5 and SDCBP. Interacts with GAS8/DRC4. Post-translationally, phosphorylation by GRK kinases is required for interaction with protein kinase A catalytic subunit PRKACA. As to expression, during early somite stages of embryonic development, modestly up-regulated in the cells of the node (at protein level).

The protein resides in the cell membrane. It is found in the cell projection. Its subcellular location is the cilium. In terms of biological role, g protein-coupled receptor which associates with the patched protein (PTCH) to transduce hedgehog protein signaling. Binding of sonic hedgehog (SHH) to its receptor patched prevents inhibition of smoothened (SMO) by patched. When active, SMO binds to and sequesters protein kinase A catalytic subunit PRKACA at the cell membrane, preventing PRKACA-mediated phosphorylation of GLI transcription factors which releases the GLI proteins from PRKACA-mediated inhibition and allows for transcriptional activation of hedgehog pathway target genes. Required for the accumulation of KIF7, GLI2 and GLI3 in the cilia. Interacts with DLG5 at the ciliary base to induce the accumulation of KIF7 and GLI2 at the ciliary tip for GLI2 activation. The polypeptide is Protein smoothened (Smo) (Mus musculus (Mouse)).